The following is a 222-amino-acid chain: Pleckstrin homology domain-containing family B member 2 (222 aa).

In terms of domain architecture, PH spans 2-109; sequence AFVKSGWLLR…WKFTLQDSRT (108 aa). Position 20 (Lys-20) interacts with a 1,2-diacyl-sn-glycero-3-phospho-L-serine.

It is found in the recycling endosome membrane. In terms of biological role, involved in retrograde transport of recycling endosomes. The chain is Pleckstrin homology domain-containing family B member 2 (PLEKHB2) from Pongo abelii (Sumatran orangutan).